Consider the following 99-residue polypeptide: SAGA-associated factor 11 (99 aa).

The SGF11-type zinc finger occupies 71 to 92; the sequence is IHCENCGRDVSANRLAAHLQRC.

Belongs to the SGF11 family. As to quaternary structure, component of the 1.8 MDa SAGA transcription coactivator-HAT complex. SAGA is built of 5 distinct domains with specialized functions. Within the SAGA complex, SUS1, SGF11, SGF73 and UBP8 form an additional subcomplex of SAGA called the DUB module (deubiquitination module). Interacts directly with SGF73, SUS1 and UBP8.

It is found in the nucleus. In terms of biological role, functions as a component of the transcription regulatory histone acetylation (HAT) complex SAGA. At the promoters, SAGA is required for recruitment of the basal transcription machinery. It influences RNA polymerase II transcriptional activity through different activities such as TBP interaction and promoter selectivity, interaction with transcription activators, and chromatin modification through histone acetylation and deubiquitination. SAGA acetylates nucleosomal histone H3 to some extent (to form H3K9ac, H3K14ac, H3K18ac and H3K23ac). SAGA interacts with DNA via upstream activating sequences (UASs). Involved in transcriptional regulation of a subset of SAGA-regulated genes. Within the SAGA complex, participates in a subcomplex, that specifically deubiquitinates histones H2B. The chain is SAGA-associated factor 11 from Saccharomyces cerevisiae (strain RM11-1a) (Baker's yeast).